The primary structure comprises 276 residues: Dermonecrotic toxin LsaSicTox-alphaIB2i (276 aa).

His5 is a catalytic residue. Positions 25 and 27 each coordinate Mg(2+). His41 serves as the catalytic Nucleophile. Intrachain disulfides connect Cys45–Cys51 and Cys47–Cys190. Asp85 is a Mg(2+) binding site. Asn129 and Asn253 each carry an N-linked (GlcNAc...) asparagine glycan.

Belongs to the arthropod phospholipase D family. Class II subfamily. It depends on Mg(2+) as a cofactor. Expressed by the venom gland.

It is found in the secreted. The catalysed reaction is an N-(acyl)-sphingosylphosphocholine = an N-(acyl)-sphingosyl-1,3-cyclic phosphate + choline. It carries out the reaction an N-(acyl)-sphingosylphosphoethanolamine = an N-(acyl)-sphingosyl-1,3-cyclic phosphate + ethanolamine. It catalyses the reaction a 1-acyl-sn-glycero-3-phosphocholine = a 1-acyl-sn-glycero-2,3-cyclic phosphate + choline. The enzyme catalyses a 1-acyl-sn-glycero-3-phosphoethanolamine = a 1-acyl-sn-glycero-2,3-cyclic phosphate + ethanolamine. Functionally, dermonecrotic toxins cleave the phosphodiester linkage between the phosphate and headgroup of certain phospholipids (sphingolipid and lysolipid substrates), forming an alcohol (often choline) and a cyclic phosphate. This toxin acts on sphingomyelin (SM). It may also act on ceramide phosphoethanolamine (CPE), lysophosphatidylcholine (LPC) and lysophosphatidylethanolamine (LPE), but not on lysophosphatidylserine (LPS), and lysophosphatidylglycerol (LPG). It acts by transphosphatidylation, releasing exclusively cyclic phosphate products as second products. Induces dermonecrosis, hemolysis, increased vascular permeability, edema, inflammatory response, and platelet aggregation. In Loxosceles sabina (Tucson recluse spider), this protein is Dermonecrotic toxin LsaSicTox-alphaIB2i.